A 273-amino-acid chain; its full sequence is Bis(5'-nucleosyl)-tetraphosphatase, symmetrical (273 aa).

This sequence belongs to the Ap4A hydrolase family.

The enzyme catalyses P(1),P(4)-bis(5'-adenosyl) tetraphosphate + H2O = 2 ADP + 2 H(+). Its function is as follows. Hydrolyzes diadenosine 5',5'''-P1,P4-tetraphosphate to yield ADP. This is Bis(5'-nucleosyl)-tetraphosphatase, symmetrical from Aeromonas hydrophila subsp. hydrophila (strain ATCC 7966 / DSM 30187 / BCRC 13018 / CCUG 14551 / JCM 1027 / KCTC 2358 / NCIMB 9240 / NCTC 8049).